We begin with the raw amino-acid sequence, 621 residues long: tRNA uridine 5-carboxymethylaminomethyl modification enzyme MnmG (621 aa).

8–13 is an FAD binding site; the sequence is GAGHAG. Position 269-283 (269-283) interacts with NAD(+); sequence GPRYCPSVEDKIFRF.

This sequence belongs to the MnmG family. In terms of assembly, homodimer. Heterotetramer of two MnmE and two MnmG subunits. FAD is required as a cofactor.

The protein localises to the cytoplasm. In terms of biological role, NAD-binding protein involved in the addition of a carboxymethylaminomethyl (cmnm) group at the wobble position (U34) of certain tRNAs, forming tRNA-cmnm(5)s(2)U34. This chain is tRNA uridine 5-carboxymethylaminomethyl modification enzyme MnmG, found in Chlorobium phaeobacteroides (strain DSM 266 / SMG 266 / 2430).